The primary structure comprises 137 residues: Putative pre-16S rRNA nuclease (137 aa).

Belongs to the YqgF nuclease family.

The protein resides in the cytoplasm. Functionally, could be a nuclease involved in processing of the 5'-end of pre-16S rRNA. This is Putative pre-16S rRNA nuclease from Buchnera aphidicola subsp. Baizongia pistaciae (strain Bp).